The following is a 350-amino-acid chain: DNA-directed RNA polymerase subunit alpha (350 aa).

The alpha N-terminal domain (alpha-NTD) stretch occupies residues 1 to 226 (MLISQRPTLS…ELFGLARELN (226 aa)). Residues 241 to 350 (ADHIASFALP…NQDYAETEQL (110 aa)) are alpha C-terminal domain (alpha-CTD). The tract at residues 328 to 350 (GTWTSDAGYDLDDNQDYAETEQL) is disordered. Acidic residues predominate over residues 336–350 (YDLDDNQDYAETEQL).

It belongs to the RNA polymerase alpha chain family. As to quaternary structure, homodimer. The RNAP catalytic core consists of 2 alpha, 1 beta, 1 beta' and 1 omega subunit. When a sigma factor is associated with the core the holoenzyme is formed, which can initiate transcription.

It catalyses the reaction RNA(n) + a ribonucleoside 5'-triphosphate = RNA(n+1) + diphosphate. Functionally, DNA-dependent RNA polymerase catalyzes the transcription of DNA into RNA using the four ribonucleoside triphosphates as substrates. The polypeptide is DNA-directed RNA polymerase subunit alpha (Mycolicibacterium smegmatis (strain ATCC 700084 / mc(2)155) (Mycobacterium smegmatis)).